We begin with the raw amino-acid sequence, 87 residues long: Large ribosomal subunit protein bL31B (87 aa).

The protein belongs to the bacterial ribosomal protein bL31 family. Type B subfamily. Part of the 50S ribosomal subunit.

This is Large ribosomal subunit protein bL31B from Burkholderia multivorans (strain ATCC 17616 / 249).